The sequence spans 1088 residues: RNA-directed RNA polymerase (1088 aa).

The 187-residue stretch at 501–687 (LSYGDVTRFL…AKRYIAGGKI (187 aa)) folds into the RdRp catalytic domain.

The protein belongs to the reoviridae RNA-directed RNA polymerase family. Interacts with VP3 (Potential). Interacts with VP2; this interaction activates VP1. Interacts with NSP5; this interaction is probably necessary for the formation of functional virus factories. Interacts with NSP2; this interaction is weak. Mg(2+) serves as cofactor.

Its subcellular location is the virion. The catalysed reaction is RNA(n) + a ribonucleoside 5'-triphosphate = RNA(n+1) + diphosphate. In terms of biological role, RNA-directed RNA polymerase that is involved in both transcription and genome replication. Together with VP3 capping enzyme, forms an enzyme complex positioned near the channels situated at each of the five-fold vertices of the core. Following infection, the outermost layer of the virus is lost, leaving a double-layered particle (DLP) made up of the core and VP6 shell. VP1 then catalyzes the transcription of fully conservative plus-strand genomic RNAs that are extruded through the DLP's channels into the cytoplasm where they function as mRNAs for translation of viral proteins. One copy of each of the viral (+)RNAs is also recruited during core assembly, together with newly synthesized polymerase complexes and VP2. The polymerase of these novo-formed particles catalyzes the synthesis of complementary minus-strands leading to dsRNA formation. To do so, the polymerase specifically recognizes and binds 4 bases 5'-UGUG-3' in the conserved 3'-sequence of plus-strand RNA templates. VP2 presumably activates the autoinhibited VP1-RNA complex to coordinate packaging and genome replication. Once dsRNA synthesis is complete, the polymerase switches to the transcriptional mode, thus providing secondary transcription. The polypeptide is RNA-directed RNA polymerase (Chlorocebus pygerythrus (Vervet monkey)).